Reading from the N-terminus, the 447-residue chain is Mannose/glucose-specific lectin (447 aa).

Jacalin-type lectin domains are found at residues 5-148, 153-294, and 300-443; these read MISV…FVKP, TISF…YVKP, and SISI…FVKP.

The protein belongs to the jacalin lectin family. Expressed in seeds (at protein level).

Hemagglutinating activity is slightly inhibited by alpha-methyl-D-mannopyranoside. In terms of biological role, D-mannose/D-glucose-binding lectin that also binds derivatives N-acetyl-D-glucosamine and alpha-methyl-D-mannopyranoside. Does not bind D-galactose, L-Rhamnose, D-fructose, lactose or glycoproteins fetiun and mucin. Shows agglutinating activity towards human and rabbit erythrocytes. Also displays antimicrobial activity against L.infantum. The polypeptide is Mannose/glucose-specific lectin (Parkia pendula (Inga pendula)).